The chain runs to 201 residues: Outer-membrane lipoprotein LolB (201 aa).

Positions 1-18 (MKWCRLSIILMSLILLAG) are cleaved as a signal peptide. Cysteine 19 carries N-palmitoyl cysteine lipidation. The S-diacylglycerol cysteine moiety is linked to residue cysteine 19.

Belongs to the LolB family. In terms of assembly, monomer.

Its subcellular location is the cell outer membrane. Plays a critical role in the incorporation of lipoproteins in the outer membrane after they are released by the LolA protein. The polypeptide is Outer-membrane lipoprotein LolB (Nitrosococcus oceani (strain ATCC 19707 / BCRC 17464 / JCM 30415 / NCIMB 11848 / C-107)).